Here is a 211-residue protein sequence, read N- to C-terminus: MKPPISIQASEFDSSDEEPVDEEQTPIQISWLPLSRVNCSQFLGLCALPGCKFKDVRRNIQKDTEELKSYGIQDVFVFCTRGELSKYRVPNLLDLYQQYGIVTHHHPIPDGGTPDIGSCWEIMEELATCLKNNRKTLIHCYGGLGRSCLAACLLLYLSDSISPQQAIDSLRDVRGSGAIQTIKQYNYLHEFRDKLAAYLSSRDSLSRSVSR.

Residues 1–20 form a disordered region; sequence MKPPISIQASEFDSSDEEPV. Residues 1–34 are interaction with CDK2; that stretch reads MKPPISIQASEFDSSDEEPVDEEQTPIQISWLPL. The 169-residue stretch at 32–200 folds into the Tyrosine-protein phosphatase domain; that stretch reads LPLSRVNCSQ…FRDKLAAYLS (169 aa). C140 functions as the Phosphocysteine intermediate in the catalytic mechanism.

This sequence belongs to the protein-tyrosine phosphatase family. Interacts with cyclin-dependent kinases such as CDK1, CDK2 and CDK3. Does not interact with CDK4. Interacts (via C-terminus) with phosphorylated CDK2 (via C-terminal helix). Interacts with MS4A3 (via C-terminus); the interaction enhances CDKN3 enzymatic activity.

Its subcellular location is the cytoplasm. It localises to the perinuclear region. The catalysed reaction is O-phospho-L-tyrosyl-[protein] + H2O = L-tyrosyl-[protein] + phosphate. It carries out the reaction O-phospho-L-seryl-[protein] + H2O = L-seryl-[protein] + phosphate. The enzyme catalyses O-phospho-L-threonyl-[protein] + H2O = L-threonyl-[protein] + phosphate. Its function is as follows. May play a role in cell cycle regulation. Dual specificity phosphatase active toward substrates containing either phosphotyrosine or phosphoserine residues. Dephosphorylates CDK2 at 'Thr-160' in a cyclin-dependent manner. The sequence is that of Cyclin-dependent kinase inhibitor 3 from Mus musculus (Mouse).